Here is a 115-residue protein sequence, read N- to C-terminus: MTDKFYFYGLFWGILLFVFLQHMQGNVPPTPLPPLSSEDLVNRSATPQLPPTCDGNATTFGGVKFPKKKTPPACACKVLEKFSCMGSFGCIGYSWGCSCCCFKSCKNVTTSPLLQ.

An N-terminal signal peptide occupies residues M1 to G25.

In Equine herpesvirus 2 (strain 86/87) (EHV-2), this protein is Protein E6A (12).